Here is a 297-residue protein sequence, read N- to C-terminus: Protoheme IX farnesyltransferase (297 aa).

Helical transmembrane passes span 23–43 (VTQL…PGMP), 49–69 (VFGT…NCLI), 93–113 (IQVL…LYHL), 117–137 (LTMW…TVIL), 144–164 (NIVI…AAVA), 171–191 (AWVL…ALAL), 215–235 (RLHI…PYAI), 238–258 (SGAL…WYAW), and 275–295 (FSIL…WVGL).

The protein belongs to the UbiA prenyltransferase family. Protoheme IX farnesyltransferase subfamily.

The protein resides in the cell inner membrane. The catalysed reaction is heme b + (2E,6E)-farnesyl diphosphate + H2O = Fe(II)-heme o + diphosphate. Its pathway is porphyrin-containing compound metabolism; heme O biosynthesis; heme O from protoheme: step 1/1. In terms of biological role, converts heme B (protoheme IX) to heme O by substitution of the vinyl group on carbon 2 of heme B porphyrin ring with a hydroxyethyl farnesyl side group. The chain is Protoheme IX farnesyltransferase from Bordetella bronchiseptica (strain ATCC BAA-588 / NCTC 13252 / RB50) (Alcaligenes bronchisepticus).